Consider the following 646-residue polypeptide: ATP-dependent rRNA helicase SPB4 (646 aa).

The Q motif motif lies at 15-43; that stretch reads WGALTPSLAPWILDYLSSMGFEQPTPVQK. The region spanning 46 to 247 is the Helicase ATP-binding domain; that stretch reads FDIFRGNKDV…TVGLLYPHKI (202 aa). 59–66 serves as a coordination point for ATP; sequence AVTGSGKT. The DEAD box motif lies at 195 to 198; that stretch reads DEAD. A Helicase C-terminal domain is found at 284–434; the sequence is ALCQLLERLE…PLAKPPVSVT (151 aa). Basic and acidic residues-rich tracts occupy residues 539-548 and 566-581; these read KKEKAAREAQ and NEAWSGKHEHEDVKAA. A disordered region spans residues 539–646; it reads KKEKAAREAQ…GGDEFEGFDD (108 aa). Positions 572–623 form a coiled coil; it reads KHEHEDVKAARREKKRRKREAQRLGDMTEPEREEQRKLDEMIAEVRRRNAEA. The span at 582-591 shows a compositional bias: basic residues; sequence RREKKRRKRE. Positions 600–621 are enriched in basic and acidic residues; the sequence is EPEREEQRKLDEMIAEVRRRNA. The span at 622-631 shows a compositional bias: low complexity; it reads EAPTPAAQAA.

Belongs to the DEAD box helicase family. DDX55/SPB4 subfamily. In terms of assembly, component of pre-60S ribosomal complexes.

The protein resides in the nucleus. The protein localises to the nucleolus. It catalyses the reaction ATP + H2O = ADP + phosphate + H(+). In terms of biological role, ATP-binding RNA helicase involved in the biogenesis of 60S ribosomal subunits. Binds 90S pre-ribosomal particles and dissociates from pre-60S ribosomal particles after processing of 27SB pre-rRNA. Required for the normal formation of 18S rRNA through the processing of pre-rRNAs at sites A0, A1 and A2, and the normal formation of 25S and 5.8S rRNAs through the processing of pre-rRNAs at sites C1 and C2. The polypeptide is ATP-dependent rRNA helicase SPB4 (Chaetomium globosum (strain ATCC 6205 / CBS 148.51 / DSM 1962 / NBRC 6347 / NRRL 1970) (Soil fungus)).